Reading from the N-terminus, the 140-residue chain is Holo-[acyl-carrier-protein] synthase (140 aa).

Mg(2+) contacts are provided by Asp-9 and Glu-63.

It belongs to the P-Pant transferase superfamily. AcpS family. Requires Mg(2+) as cofactor.

The protein localises to the cytoplasm. The catalysed reaction is apo-[ACP] + CoA = holo-[ACP] + adenosine 3',5'-bisphosphate + H(+). Functionally, transfers the 4'-phosphopantetheine moiety from coenzyme A to a Ser of acyl-carrier-protein. The protein is Holo-[acyl-carrier-protein] synthase of Paraburkholderia phytofirmans (strain DSM 17436 / LMG 22146 / PsJN) (Burkholderia phytofirmans).